A 388-amino-acid chain; its full sequence is Putative pyridoxal phosphate-dependent aminotransferase EpsN (388 aa).

Lysine 190 is modified (N6-(pyridoxal phosphate)lysine).

It belongs to the DegT/DnrJ/EryC1 family. Pyridoxal 5'-phosphate serves as cofactor.

In terms of biological role, may be involved in the production of the exopolysaccharide (EPS) component of the extracellular matrix during biofilm formation. EPS is responsible for the adhesion of chains of cells into bundles. In Bacillus subtilis (strain 168), this protein is Putative pyridoxal phosphate-dependent aminotransferase EpsN (epsN).